A 368-amino-acid chain; its full sequence is Histidinol-phosphate aminotransferase (368 aa).

Lysine 229 carries the post-translational modification N6-(pyridoxal phosphate)lysine.

Belongs to the class-II pyridoxal-phosphate-dependent aminotransferase family. Histidinol-phosphate aminotransferase subfamily. In terms of assembly, homodimer. Requires pyridoxal 5'-phosphate as cofactor.

It catalyses the reaction L-histidinol phosphate + 2-oxoglutarate = 3-(imidazol-4-yl)-2-oxopropyl phosphate + L-glutamate. It functions in the pathway amino-acid biosynthesis; L-histidine biosynthesis; L-histidine from 5-phospho-alpha-D-ribose 1-diphosphate: step 7/9. The polypeptide is Histidinol-phosphate aminotransferase (Acidovorax sp. (strain JS42)).